The sequence spans 637 residues: Glutamate--cysteine ligase catalytic subunit (637 aa).

Met1 carries the N-acetylmethionine modification. Phosphoserine occurs at positions 5 and 8.

The protein belongs to the glutamate--cysteine ligase type 3 family. As to quaternary structure, heterodimer of a catalytic heavy chain and a regulatory light chain.

The enzyme catalyses L-cysteine + L-glutamate + ATP = gamma-L-glutamyl-L-cysteine + ADP + phosphate + H(+). It carries out the reaction (2S)-2-aminobutanoate + L-glutamate + ATP = gamma-L-glutamyl-(2S)-2-aminobutanoate + ADP + phosphate + H(+). Its pathway is sulfur metabolism; glutathione biosynthesis; glutathione from L-cysteine and L-glutamate: step 1/2. Feedback inhibition by glutathione. In terms of biological role, catalyzes the ATP-dependent ligation of L-glutamate and L-cysteine and participates in the first and rate-limiting step in glutathione biosynthesis. The protein is Glutamate--cysteine ligase catalytic subunit of Homo sapiens (Human).